Here is a 236-residue protein sequence, read N- to C-terminus: Geranylgeranylglyceryl phosphate synthase (236 aa).

Sn-glycerol 1-phosphate is bound at residue Lys13. Residues Asp15 and Thr42 each contribute to the Mg(2+) site. Sn-glycerol 1-phosphate-binding positions include 161-166 (YVEYSG), Gly191, and 211-212 (GD).

This sequence belongs to the GGGP/HepGP synthase family. Group I subfamily. Mg(2+) serves as cofactor.

Its subcellular location is the cytoplasm. It carries out the reaction sn-glycerol 1-phosphate + (2E,6E,10E)-geranylgeranyl diphosphate = sn-3-O-(geranylgeranyl)glycerol 1-phosphate + diphosphate. The protein operates within membrane lipid metabolism; glycerophospholipid metabolism. Prenyltransferase that catalyzes the transfer of the geranylgeranyl moiety of geranylgeranyl diphosphate (GGPP) to the C3 hydroxyl of sn-glycerol-1-phosphate (G1P). This reaction is the first ether-bond-formation step in the biosynthesis of archaeal membrane lipids. The chain is Geranylgeranylglyceryl phosphate synthase from Halobacterium salinarum (strain ATCC 700922 / JCM 11081 / NRC-1) (Halobacterium halobium).